The sequence spans 188 residues: Elongation factor P (188 aa).

This sequence belongs to the elongation factor P family.

Its subcellular location is the cytoplasm. It functions in the pathway protein biosynthesis; polypeptide chain elongation. Its function is as follows. Involved in peptide bond synthesis. Stimulates efficient translation and peptide-bond synthesis on native or reconstituted 70S ribosomes in vitro. Probably functions indirectly by altering the affinity of the ribosome for aminoacyl-tRNA, thus increasing their reactivity as acceptors for peptidyl transferase. This chain is Elongation factor P, found in Methylobacterium sp. (strain 4-46).